We begin with the raw amino-acid sequence, 548 residues long: Undecaprenyl phosphate-alpha-4-amino-4-deoxy-L-arabinose arabinosyl transferase 1 (548 aa).

12 helical membrane passes run 11–31, 89–109, 114–134, 137–157, 180–200, 214–234, 263–283, 292–312, 314–334, 347–367, 382–402, and 405–425; these read WLLF…TRLL, IVVV…AMVV, ALAF…AIGT, ILDP…LVAL, FLTK…VMAI, IALL…ALQA, FYIP…FGAL, GTLY…ASKG, LLTY…HYIE, VNAS…IYSL, KIVL…GALF, and TQFL…YAIP.

This sequence belongs to the glycosyltransferase 83 family.

The protein localises to the cell inner membrane. It catalyses the reaction 4-amino-4-deoxy-alpha-L-arabinopyranosyl di-trans,octa-cis-undecaprenyl phosphate + lipid IVA = lipid IIA + di-trans,octa-cis-undecaprenyl phosphate.. It participates in lipopolysaccharide metabolism; 4-amino-4-deoxy-beta-L-arabinose-lipid A biosynthesis. Its function is as follows. Catalyzes the transfer of the L-Ara4N moiety of the glycolipid undecaprenyl phosphate-alpha-L-Ara4N to lipid A. The modified arabinose is attached to lipid A and is required for resistance to polymyxin and cationic antimicrobial peptides. This Proteus mirabilis (strain HI4320) protein is Undecaprenyl phosphate-alpha-4-amino-4-deoxy-L-arabinose arabinosyl transferase 1.